The primary structure comprises 1088 residues: V-type proton ATPase catalytic subunit A (1088 aa).

Gly-257–Thr-264 contacts ATP. The 178-residue stretch at Leu-485–Ile-662 folds into the DOD-type homing endonuclease domain.

The protein belongs to the ATPase alpha/beta chains family. V-ATPase is a heteromultimeric enzyme composed of a peripheral catalytic V1 complex (components A to H) attached to an integral membrane V0 proton pore complex (components: a, c, c', c'', d, e, f and VOA1). Post-translationally, this protein undergoes a protein self splicing that involves a post-translational excision of the VDE intervening region (intein) followed by peptide ligation.

It is found in the vacuole membrane. The catalysed reaction is ATP + H2O + 4 H(+)(in) = ADP + phosphate + 5 H(+)(out). Its function is as follows. Catalytic subunit of the V1 complex of vacuolar(H+)-ATPase (V-ATPase), a multisubunit enzyme composed of a peripheral complex (V1) that hydrolyzes ATP and a membrane integral complex (V0) that translocates protons. V-ATPase is responsible for acidifying and maintaining the pH of intracellular compartments. In terms of biological role, VDE is an endonuclease that can cleave at a site present in a VMA1 allele that lacks the derived endonuclease segment of the open reading frame; cleavage at this site only occurs during meiosis and initiates 'homing', a genetic event that converts a VMA1 allele lacking VDE into one that contains it. The chain is V-type proton ATPase catalytic subunit A (VMA1) from Candida tropicalis (Yeast).